The sequence spans 360 residues: Protein DVR-1 (360 aa).

Residues 1 to 16 form the signal peptide; that stretch reads MVWLRLWAFLHILAIV. Residues 17–246 constitute a propeptide that is removed on maturation; that stretch reads TLDPELKRRE…LRCKRPRRKR (230 aa). 3 N-linked (GlcNAc...) asparagine glycosylation sites follow: Asn113, Asn181, and Asn301. Intrachain disulfides connect Cys259–Cys325, Cys288–Cys357, and Cys292–Cys359.

It belongs to the TGF-beta family. In terms of assembly, homodimer. Vegetal region of the egg.

It is found in the secreted. In terms of biological role, serves to facilitate the differentiation of either mesoderm or endoderm either as a cofactor in an instructive signal or by providing permissive environment. The chain is Protein DVR-1 (dvr1) from Xenopus laevis (African clawed frog).